We begin with the raw amino-acid sequence, 144 residues long: Hexon-interlacing protein (144 aa).

Residues leucine 106–alanine 133 are a coiled coil.

The protein belongs to the adenoviridae hexon-interlacing protein family. Homotrimer. Interacts with hexon protein; this interaction tethers the hexons together. Self-interacts with adjacent proteins. Interacts with kinesin light chain KLC1; this interaction leads to capsid disruption at the nuclear pore complex during virus entry into host cell.

The protein localises to the virion. Its subcellular location is the host nucleus. In terms of biological role, structural component of the virion that acts as a cement protein on the capsid exterior and forms triskelion structures consisting of three molecules that stabilize three hexon trimers at the center of each icosahedral facet and fixes the peripentonal hexons. Dispensable for assembly. During virus entry, recruits the anterograde motor kinesin-1 to the capsid docked at the nuclear pore complex thereby subjecting the docked capsid to a pulling force. The resulting tension leads to capsid disruption, dispersion of capsid fragments toward cell periphery and eventually viral DNA entry into the host nucleus. The protein is Hexon-interlacing protein of Homo sapiens (Human).